The following is a 365-amino-acid chain: Peptide chain release factor 2 (365 aa).

Glutamine 252 carries the N5-methylglutamine modification.

This sequence belongs to the prokaryotic/mitochondrial release factor family. Methylated by PrmC. Methylation increases the termination efficiency of RF2.

Its subcellular location is the cytoplasm. Its function is as follows. Peptide chain release factor 2 directs the termination of translation in response to the peptide chain termination codons UGA and UAA. This is Peptide chain release factor 2 from Yersinia pseudotuberculosis serotype O:1b (strain IP 31758).